Reading from the N-terminus, the 246-residue chain is Bis(5'-nucleosyl)-tetraphosphatase PrpE [asymmetrical] (246 aa).

Belongs to the PrpE family. Requires Ni(2+) as cofactor.

It carries out the reaction P(1),P(4)-bis(5'-guanosyl) tetraphosphate + H2O = GMP + GTP + 2 H(+). In terms of biological role, asymmetrically hydrolyzes Ap4p to yield AMP and ATP. The protein is Bis(5'-nucleosyl)-tetraphosphatase PrpE [asymmetrical] of Bacillus mycoides (strain KBAB4) (Bacillus weihenstephanensis).